Here is a 1357-residue protein sequence, read N- to C-terminus: DNA-directed RNA polymerase subunit beta (1357 aa).

This sequence belongs to the RNA polymerase beta chain family. In terms of assembly, the RNAP catalytic core consists of 2 alpha, 1 beta, 1 beta' and 1 omega subunit. When a sigma factor is associated with the core the holoenzyme is formed, which can initiate transcription.

It catalyses the reaction RNA(n) + a ribonucleoside 5'-triphosphate = RNA(n+1) + diphosphate. DNA-dependent RNA polymerase catalyzes the transcription of DNA into RNA using the four ribonucleoside triphosphates as substrates. The sequence is that of DNA-directed RNA polymerase subunit beta from Ectopseudomonas mendocina (strain ymp) (Pseudomonas mendocina).